Here is a 66-residue protein sequence, read N- to C-terminus: Antitoxin RelB2 (66 aa).

Its function is as follows. Antitoxin component of a type II toxin-antitoxin (TA) system. Neutralizes the effect of cognate toxin RelE2, but no other RelE or ParE toxin. This is Antitoxin RelB2 (relB2) from Caulobacter vibrioides (strain ATCC 19089 / CIP 103742 / CB 15) (Caulobacter crescentus).